Here is a 179-residue protein sequence, read N- to C-terminus: Cytochrome b6-f complex iron-sulfur subunit 1 (179 aa).

A helical transmembrane segment spans residues 21–43; the sequence is LLTFGTVTGVALGALYPVVNYFI. Positions 61–162 constitute a Rieske domain; sequence GNDVSVSKFL…AKTENDKIVL (102 aa). The [2Fe-2S] cluster site is built by Cys108, His110, Cys126, and His129. An intrachain disulfide couples Cys113 to Cys128.

Belongs to the Rieske iron-sulfur protein family. In terms of assembly, the 4 large subunits of the cytochrome b6-f complex are cytochrome b6, subunit IV (17 kDa polypeptide, PetD), cytochrome f and the Rieske protein, while the 4 small subunits are PetG, PetL, PetM and PetN. The complex functions as a dimer. The cofactor is [2Fe-2S] cluster.

The protein localises to the cellular thylakoid membrane. The catalysed reaction is 2 oxidized [plastocyanin] + a plastoquinol + 2 H(+)(in) = 2 reduced [plastocyanin] + a plastoquinone + 4 H(+)(out). Component of the cytochrome b6-f complex, which mediates electron transfer between photosystem II (PSII) and photosystem I (PSI), cyclic electron flow around PSI, and state transitions. The protein is Cytochrome b6-f complex iron-sulfur subunit 1 of Trichormus variabilis (strain ATCC 29413 / PCC 7937) (Anabaena variabilis).